A 307-amino-acid chain; its full sequence is Recombination-associated protein RdgC (307 aa).

The protein belongs to the RdgC family.

It is found in the cytoplasm. Its subcellular location is the nucleoid. In terms of biological role, may be involved in recombination. This chain is Recombination-associated protein RdgC, found in Burkholderia orbicola (strain MC0-3).